We begin with the raw amino-acid sequence, 191 residues long: Ribonuclease HII (191 aa).

The region spanning 7–191 (ILMAGVDEVG…YSPVADLISK (185 aa)) is the RNase H type-2 domain. The a divalent metal cation site is built by aspartate 13, glutamate 14, and aspartate 103.

It belongs to the RNase HII family. It depends on Mn(2+) as a cofactor. Mg(2+) serves as cofactor.

It localises to the cytoplasm. The catalysed reaction is Endonucleolytic cleavage to 5'-phosphomonoester.. Its function is as follows. Endonuclease that specifically degrades the RNA of RNA-DNA hybrids. The protein is Ribonuclease HII of Legionella pneumophila subsp. pneumophila (strain Philadelphia 1 / ATCC 33152 / DSM 7513).